The primary structure comprises 434 residues: NADH-quinone oxidoreductase subunit F 1 (434 aa).

Residue 54–63 (GRGGAGFPTG) coordinates NAD(+). 166-213 (GAGAYICGEETALLESLEGKKGQPRLKPPFPANMGLYGCPTTVNNVES) contributes to the FMN binding site. Cys345, Cys348, Cys351, and Cys391 together coordinate [4Fe-4S] cluster.

Belongs to the complex I 51 kDa subunit family. The cofactor is FMN. It depends on [4Fe-4S] cluster as a cofactor.

It catalyses the reaction a quinone + NADH + 5 H(+)(in) = a quinol + NAD(+) + 4 H(+)(out). Functionally, NDH-1 shuttles electrons from NADH, via FMN and iron-sulfur (Fe-S) centers, to quinones in the respiratory chain. The immediate electron acceptor for the enzyme in this species is believed to be ubiquinone. Couples the redox reaction to proton translocation (for every two electrons transferred, four hydrogen ions are translocated across the cytoplasmic membrane), and thus conserves the redox energy in a proton gradient. This Rhizobium meliloti (strain 1021) (Ensifer meliloti) protein is NADH-quinone oxidoreductase subunit F 1 (nuoF1).